Reading from the N-terminus, the 309-residue chain is Protein FdhE (309 aa).

It belongs to the FdhE family.

It is found in the cytoplasm. Necessary for formate dehydrogenase activity. The chain is Protein FdhE from Salmonella choleraesuis (strain SC-B67).